The sequence spans 444 residues: C4-dicarboxylate transport protein (444 aa).

9 helical membrane passes run 15 to 35 (VIVA…FGVA), 46 to 66 (LIKM…IAGM), 78 to 98 (YALL…LIVV), 143 to 163 (IVGA…VIFG), 199 to 219 (PIGA…GSLV), 224 to 244 (LMIC…GGIA), 291 to 311 (VVGL…AIYL), 332 to 352 (ITLL…TGSG), and 354 to 374 (IVLA…LALI). Residues 422–444 (GIADTRPEDDLGVAEGPTPSNVK) are disordered.

It belongs to the dicarboxylate/amino acid:cation symporter (DAACS) (TC 2.A.23) family.

It is found in the cell inner membrane. In terms of biological role, responsible for the transport of dicarboxylates such as succinate, fumarate, and malate from the periplasm across the membrane. The protein is C4-dicarboxylate transport protein of Pseudomonas fluorescens (strain Pf0-1).